Here is a 338-residue protein sequence, read N- to C-terminus: MDSFPAIEIDKVKAWDFRLANINTSECLNVAYGVDANYLDGVGVSITSIVLNNRHINLDFYIIADVYNDGFFQKIAKLAEQNQLRITLYRINTDKLQCLPCTQVWSRAMYFRLFAFQLLGLTLDRLLYLDADVVCKGDISQLLHLGLNGAVAAVVKDVEPMQEKAVSRLSDPELLGQYFNSGVVYLDLKKWADAKLTEKALSILMSKDNVYKYPDQDVMNVLLKGMTLFLPREYNTIYTIKSELKDKTHQNYKKLITESTLLIHYTGATKPWHKWAIYPSVKYYKIALENSPWKDDSPRDAKSIIEFKKRYKHLLVQHHYISGIIAGVCYLCRKYYRK.

UDP-binding positions include 33 to 38 and 130 to 131; these read GVDANY and DA. Residues Asp-130 and Asp-132 each contribute to the Mg(2+) site. 2 short sequence motifs (DXD) span residues 130-132 and 215-217; these read DAD and DQD. His-264 is a Mg(2+) binding site. 264 to 270 is a binding site for UDP; that stretch reads HYTGATK.

This sequence belongs to the glycosyltransferase 8 family. Mg(2+) serves as cofactor.

Its subcellular location is the cell inner membrane. The enzyme catalyses UDP-glucose + [lipopolysaccharide] = UDP + D-glucosyl-[lipopolysaccharide].. It catalyses the reaction alpha-D-Glc-(1-&gt;3)-[alpha-D-Gal-(1-&gt;6)]-alpha-D-Glc-(1-&gt;3)-[L-alpha-D-Hep-(1-&gt;7)]-4-O-PO3(2-)-L-alpha-D-Hep-(1-&gt;3)-4-O-PO3(2-)-L-alpha-D-Hep-(1-&gt;5)-[alpha-Kdo-(2-&gt;4)]-alpha-Kdo-(2-&gt;6)-lipid A + UDP-alpha-D-glucose = alpha-D-Glc-(1-&gt;2)-alpha-D-Glc-(1-&gt;3)-[alpha-D-Gal-(1-&gt;6)]-alpha-D-Glc-(1-&gt;3)-[L-alpha-D-Hep-(1-&gt;7)]-4-O-PO3(2-)-L-alpha-D-Hep-(1-&gt;3)-4-O-PO3(2-)-L-alpha-D-Hep-(1-&gt;5)-[alpha-Kdo-(2-&gt;4)]-alpha-Kdo-(2-&gt;6)-lipid A + UDP + H(+). Its pathway is bacterial outer membrane biogenesis; LPS core biosynthesis. Its function is as follows. Glucosyltransferase involved in the biosynthesis of the core oligosaccharide region of lipopolysaccharide (LPS). Catalyzes the addition of a glucose (glucose III) to the outer-core glucose II. This chain is Lipopolysaccharide 1,2-glucosyltransferase, found in Escherichia coli (strain K12).